Here is a 70-residue protein sequence, read N- to C-terminus: UPF0352 protein PBPRA2586 (70 aa).

The protein belongs to the UPF0352 family.

The polypeptide is UPF0352 protein PBPRA2586 (Photobacterium profundum (strain SS9)).